Here is a 353-residue protein sequence, read N- to C-terminus: D-alanine--D-alanine ligase (353 aa).

Residues 141–349 (KAAFAAAGLP…LEELVSQLVI (209 aa)) form the ATP-grasp domain. Residue 176–231 (EAKLKYPCFVKPANLGSSVGISKAQNRNELLIGLDKAASLDRRIVVEQGVSARELE) coordinates ATP. The Mg(2+) site is built by Asp302, Glu316, and Asn318.

This sequence belongs to the D-alanine--D-alanine ligase family. Mg(2+) serves as cofactor. Requires Mn(2+) as cofactor.

It localises to the cytoplasm. The catalysed reaction is 2 D-alanine + ATP = D-alanyl-D-alanine + ADP + phosphate + H(+). Its pathway is cell wall biogenesis; peptidoglycan biosynthesis. Cell wall formation. This Prochlorococcus marinus (strain MIT 9303) protein is D-alanine--D-alanine ligase.